A 391-amino-acid chain; its full sequence is Phosphoglycerate kinase (391 aa).

Substrate contacts are provided by residues 21–23, Arg-36, 59–62, Arg-113, and Arg-146; these read DLN and HLGR. ATP-binding positions include Lys-197, Glu-319, and 345-348; that span reads GGDT.

This sequence belongs to the phosphoglycerate kinase family. As to quaternary structure, monomer.

The protein resides in the cytoplasm. It carries out the reaction (2R)-3-phosphoglycerate + ATP = (2R)-3-phospho-glyceroyl phosphate + ADP. It participates in carbohydrate degradation; glycolysis; pyruvate from D-glyceraldehyde 3-phosphate: step 2/5. The polypeptide is Phosphoglycerate kinase (Colwellia psychrerythraea (strain 34H / ATCC BAA-681) (Vibrio psychroerythus)).